We begin with the raw amino-acid sequence, 146 residues long: Large ribosomal subunit protein uL11 (146 aa).

Belongs to the universal ribosomal protein uL11 family. As to quaternary structure, part of the ribosomal stalk of the 50S ribosomal subunit. Interacts with L10 and the large rRNA to form the base of the stalk. L10 forms an elongated spine to which L12 dimers bind in a sequential fashion forming a multimeric L10(L12)X complex. In terms of processing, one or more lysine residues are methylated.

Forms part of the ribosomal stalk which helps the ribosome interact with GTP-bound translation factors. The protein is Large ribosomal subunit protein uL11 of Corynebacterium jeikeium (strain K411).